A 314-amino-acid polypeptide reads, in one-letter code: DNA-directed RNA polymerase subunit alpha (314 aa).

The interval 1–227 is alpha N-terminal domain (alpha-NTD); it reads MLEIEKPKIE…DYLKLFVALT (227 aa). The interval 244 to 314 is alpha C-terminal domain (alpha-CTD); sequence QDKILEMTIE…LGLSLRKSED (71 aa).

It belongs to the RNA polymerase alpha chain family. Homodimer. The RNAP catalytic core consists of 2 alpha, 1 beta, 1 beta' and 1 omega subunit. When a sigma factor is associated with the core the holoenzyme is formed, which can initiate transcription.

It catalyses the reaction RNA(n) + a ribonucleoside 5'-triphosphate = RNA(n+1) + diphosphate. Its function is as follows. DNA-dependent RNA polymerase catalyzes the transcription of DNA into RNA using the four ribonucleoside triphosphates as substrates. The chain is DNA-directed RNA polymerase subunit alpha from Heliobacterium modesticaldum (strain ATCC 51547 / Ice1).